A 359-amino-acid polypeptide reads, in one-letter code: Peptide chain release factor 1 (359 aa).

Residue Gln235 is modified to N5-methylglutamine.

It belongs to the prokaryotic/mitochondrial release factor family. In terms of processing, methylated by PrmC. Methylation increases the termination efficiency of RF1.

It localises to the cytoplasm. Peptide chain release factor 1 directs the termination of translation in response to the peptide chain termination codons UAG and UAA. This chain is Peptide chain release factor 1, found in Nitrosomonas europaea (strain ATCC 19718 / CIP 103999 / KCTC 2705 / NBRC 14298).